Consider the following 405-residue polypeptide: Acetylornithine/succinyldiaminopimelate aminotransferase (405 aa).

Pyridoxal 5'-phosphate-binding positions include 107 to 108 and F140; that span reads GA. Residue R143 participates in N(2)-acetyl-L-ornithine binding. Pyridoxal 5'-phosphate is bound at residue 225–228; that stretch reads DEVQ. Residue K254 is modified to N6-(pyridoxal phosphate)lysine. N(2)-acetyl-L-ornithine is bound at residue T282. T283 is a pyridoxal 5'-phosphate binding site.

Belongs to the class-III pyridoxal-phosphate-dependent aminotransferase family. ArgD subfamily. Homodimer. Pyridoxal 5'-phosphate serves as cofactor.

It is found in the cytoplasm. It carries out the reaction N(2)-acetyl-L-ornithine + 2-oxoglutarate = N-acetyl-L-glutamate 5-semialdehyde + L-glutamate. The catalysed reaction is N-succinyl-(2S,6S)-2,6-diaminopimelate + 2-oxoglutarate = (S)-2-succinylamino-6-oxoheptanedioate + L-glutamate. It functions in the pathway amino-acid biosynthesis; L-arginine biosynthesis; N(2)-acetyl-L-ornithine from L-glutamate: step 4/4. Its pathway is amino-acid biosynthesis; L-lysine biosynthesis via DAP pathway; LL-2,6-diaminopimelate from (S)-tetrahydrodipicolinate (succinylase route): step 2/3. Its function is as follows. Involved in both the arginine and lysine biosynthetic pathways. The sequence is that of Acetylornithine/succinyldiaminopimelate aminotransferase from Yersinia pestis.